Here is a 429-residue protein sequence, read N- to C-terminus: Actin-like protein 6A (429 aa).

Serine 2 bears the N-acetylserine mark. Residue lysine 62 forms a Glycyl lysine isopeptide (Lys-Gly) (interchain with G-Cter in SUMO2) linkage. A phosphoserine mark is found at serine 86 and serine 233.

The protein belongs to the actin family. Component of numerous complexes with chromatin remodeling and histone acetyltransferase activity. Component of the NuA4 histone acetyltransferase complex which contains the catalytic subunit KAT5/TIP60 and the subunits EP400, TRRAP/PAF400, BRD8/SMAP, EPC1, DMAP1/DNMAP1, RUVBL1/TIP49, RUVBL2, ING3, actin, ACTL6A/BAF53A, MORF4L1/MRG15, MORF4L2/MRGX, MRGBP, YEATS4/GAS41, VPS72/YL1 and MEAF6. The NuA4 complex interacts with MYC and the adenovirus E1A protein. Component of a NuA4-related complex which contains EP400, TRRAP/PAF400, SRCAP, BRD8/SMAP, EPC1, DMAP1/DNMAP1, RUVBL1/TIP49, RUVBL2, actin, ACTL6A/BAF53A, VPS72 and YEATS4/GAS41. Component of the multiprotein chromatin-remodeling complexes SWI/SNF: SWI/SNF-A (BAF), SWI/SNF-B (PBAF) and related complexes. The canonical complex contains a catalytic subunit (either SMARCA4/BRG1/BAF190A or SMARCA2/BRM/BAF190B) and at least SMARCE1, ACTL6A/BAF53, SMARCC1/BAF155, SMARCC2/BAF170, and SMARCB1/SNF5/BAF47. Other subunits specific to each of the complexes may also be present permitting several possible combinations developmentally and tissue specific. Component of the BAF complex, which includes at least actin (ACTB), ARID1A/BAF250A, ARID1B/BAF250B, SMARCA2/BRM, SMARCA4/BRG1/BAF190A, ACTL6A/BAF53, ACTL6B/BAF53B, SMARCE1/BAF57, SMARCC1/BAF155, SMARCC2/BAF170, SMARCB1/SNF5/INI1, and one or more SMARCD1/BAF60A, SMARCD2/BAF60B, or SMARCD3/BAF60C. In muscle cells, the BAF complex also contains DPF3. Component of the BAF53 complex, at least composed of ACTL6A/BAF53A, RUVBL1/TIP49, SMARCA2/BRM/BAF190B and TRRAP/PAF400, and which may also include a HAT activity related to, but distinct from, that of KAT5. Component of neural progenitors-specific chromatin remodeling complex (npBAF complex) composed of at least, ARID1A/BAF250A or ARID1B/BAF250B, SMARCD1/BAF60A, SMARCD3/BAF60C, SMARCA2/BRM/BAF190B, SMARCA4/BRG1/BAF190A, SMARCB1/BAF47, SMARCC1/BAF155, SMARCE1/BAF57, SMARCC2/BAF170, PHF10/BAF45A, ACTL6A/BAF53A and actin. Component of SWI/SNF (GBAF) subcomplex, which includes at least BICRA or BICRAL (mutually exclusive), BRD9, SS18, SMARCA2/BRM, SMARCA4/BRG1/BAF190A, ACTL6A/BAF53, SMARCC1/BAF155, and SMARCD1/BAF60A. May be a component of the SWI/SNF-B (PBAF) chromatin remodeling complex, at least composed of SMARCA4/BRG1, SMARCB1/BAF47/SNF5, ACTL6A/BAF53A or ACTL6B/BAF53B, SMARCE1/BAF57, SMARCD1/BAF60A, SMARCD2/BAF60B, perhaps SMARCD3/BAF60C, SMARCC1/BAF155, SMARCC2/BAF170, PBRM1/BAF180, ARID2/BAF200 and actin. Interacts with SMARCA4/BRG1/BAF190A. Interacts with PHF10/BAF45A. Component of the chromatin remodeling INO80 complex; specifically part of a complex module associated with the DBINO domain of INO80. Interacts with DPF2. Widely expressed. Expressed selectively in neural stem and progenitor cells (at protein level).

Its subcellular location is the nucleus. Involved in transcriptional activation and repression of select genes by chromatin remodeling (alteration of DNA-nucleosome topology). Component of SWI/SNF chromatin remodeling complexes that carry out key enzymatic activities, changing chromatin structure by altering DNA-histone contacts within a nucleosome in an ATP-dependent manner. Required for maximal ATPase activity of SMARCA4/BRG1/BAF190A and for association of the SMARCA4/BRG1/BAF190A containing remodeling complex BAF with chromatin/nuclear matrix. Belongs to the neural progenitors-specific chromatin remodeling complex (npBAF complex) and is required for the proliferation of neural progenitors. During neural development a switch from a stem/progenitor to a postmitotic chromatin remodeling mechanism occurs as neurons exit the cell cycle and become committed to their adult state. The transition from proliferating neural stem/progenitor cells to postmitotic neurons requires a switch in subunit composition of the npBAF and nBAF complexes. As neural progenitors exit mitosis and differentiate into neurons, npBAF complexes which contain ACTL6A/BAF53A and PHF10/BAF45A, are exchanged for homologous alternative ACTL6B/BAF53B and DPF1/BAF45B or DPF3/BAF45C subunits in neuron-specific complexes (nBAF). The npBAF complex is essential for the self-renewal/proliferative capacity of the multipotent neural stem cells. The nBAF complex along with CREST plays a role regulating the activity of genes essential for dendrite growth. Component of the NuA4 histone acetyltransferase (HAT) complex which is involved in transcriptional activation of select genes principally by acetylation of nucleosomal histones H4 and H2A. This modification may both alter nucleosome - DNA interactions and promote interaction of the modified histones with other proteins which positively regulate transcription. This complex may be required for the activation of transcriptional programs associated with oncogene and proto-oncogene mediated growth induction, tumor suppressor mediated growth arrest and replicative senescence, apoptosis, and DNA repair. NuA4 may also play a direct role in DNA repair when recruited to sites of DNA damage. Putative core component of the chromatin remodeling INO80 complex which is involved in transcriptional regulation, DNA replication and probably DNA repair. In Mus musculus (Mouse), this protein is Actin-like protein 6A (Actl6a).